Reading from the N-terminus, the 444-residue chain is Cop9 signalosome complex subunit 11 (444 aa).

The PCI domain occupies 195–367; that stretch reads FFTMMTSEPL…IHFEDSSILQ (173 aa). The segment at 419–439 is disordered; that stretch reads SSDDMDIDEVNDRSDISDSEG.

In terms of assembly, component of a COP9 signalosome-like (CSN) complex, composed of RRI1/CSN5, CSN9, RRI2/CSN10, PCI8/CSN11, CSN12 and CSI1. Interacts with PRT1 and RPG1, 2 subunits of the core complex of translation initiation factor 3 (eIF3).

The protein localises to the cytoplasm. It localises to the nucleus. Component of the COP9 signalosome (CSN) complex that acts as an regulator of the ubiquitin (Ubl) conjugation pathway by mediating the deneddylation of the cullin subunit of SCF-type E3 ubiquitin-protein ligase complexes The CSN complex is involved in the regulation of the mating pheromone response. PCI8 may also be involved in transcriptional and translational control. This is Cop9 signalosome complex subunit 11 (PCI8) from Saccharomyces cerevisiae (strain ATCC 204508 / S288c) (Baker's yeast).